Here is a 165-residue protein sequence, read N- to C-terminus: Protein SprT (165 aa).

Residues 20–163 enclose the SprT-like domain; the sequence is EKLAQANLKL…RCVHCGEQLV (144 aa). Histidine 78 provides a ligand contact to Zn(2+). The active site involves glutamate 79. Histidine 82 serves as a coordination point for Zn(2+).

Belongs to the SprT family. It depends on Zn(2+) as a cofactor.

The protein localises to the cytoplasm. This chain is Protein SprT, found in Shigella flexneri serotype 5b (strain 8401).